The sequence spans 100 residues: UPF0248 protein APE_0939 (100 aa).

It belongs to the UPF0248 family.

This chain is UPF0248 protein APE_0939, found in Aeropyrum pernix (strain ATCC 700893 / DSM 11879 / JCM 9820 / NBRC 100138 / K1).